A 488-amino-acid chain; its full sequence is SAGA complex subunit HFI1 (488 aa).

2 disordered regions span residues 1-58 (MSAI…QGPN) and 352-383 (QLDD…IGDI). Positions 37-58 (AVSNHTEPNNGNNETAEPQGPN) are enriched in polar residues.

Component of the 1.8 MDa SAGA (Spt-Ada-Gcn5 acetyltransferase) complex, which is composed of 19 subunits TRA1, SPT7, TAF5, NGG1/ADA3, SGF73, SPT20/ADA5, SPT8, TAF12, TAF6, HFI1/ADA1, UBP8, GCN5, ADA2, SPT3, SGF29, TAF10, TAF9, SGF11 and SUS1. The SAGA complex is composed of 4 modules, namely the HAT (histone acetyltransferase) module (GCN5, ADA2, NGG1/ADA3 and SGF29), the DUB (deubiquitinating) module (UBP8, SGF11, SGF73 and SUS1), the core or TAF (TBP-associated factor) module (TAF5, TAF6, TAF9, TAF10 and TAF12), and the Tra1 or SPT (Suppressor of Ty) module (TRA1, HFI1/ADA1, SPT3, SPT7, SPT8 and SPT20/ADA5). The Tra1/SPT module binds activators, the core module recruits TBP (TATA-binding protein), the HAT module contains the histone H3 acetyltransferase GCN5, and the DUB module comprises the histone H2B deubiquitinase UBP8. Also identified in an altered form of SAGA, named SALSA (SAGA altered, Spt8 absent) or SLIK (SAGA-like) complex, which contains a C-terminal truncated form of SPT7 and is missing SPT8. However, it has been shown that the SAGA and SAGA-like SALSA/SLIK transcriptional coactivators are structurally and biochemically equivalent. Component of an ADA/GCN5 complex that consists of HFI1/ADA1, ADA2, NGG1/ADA3, SPT20/ADA5 and GCN5 and probably is a subcomplex of SAGA.

The protein resides in the nucleus. Component of the transcription coactivator SAGA complex. SAGA acts as a general cofactor required for essentially all RNA polymerase II transcription. At the promoters, SAGA is required for transcription pre-initiation complex (PIC) recruitment. It influences RNA polymerase II transcriptional activity through different activities such as TBP interaction (via core/TAF module) and promoter selectivity, interaction with transcription activators (via Tra1/SPT module), and chromatin modification through histone acetylation (via HAT module) and deubiquitination (via DUB module). SAGA preferentially acetylates histones H3 (to form H3K9ac, H3K14ac, H3K18ac and H3K23ac) and H2B and deubiquitinates histone H2B. SAGA interacts with DNA via upstream activating sequences (UASs). Also identified in a modified version of SAGA named SALSA or SLIK. The cleavage of SPT7 and the absence of the SPT8 subunit in SLIK neither drive any major conformational differences in its structure compared with SAGA, nor significantly affect HAT, DUB, or DNA-binding activities. The sequence is that of SAGA complex subunit HFI1 (HFI1) from Saccharomyces cerevisiae (strain ATCC 204508 / S288c) (Baker's yeast).